The sequence spans 205 residues: uncharacterized protein (205 aa).

The next 5 helical transmembrane spans lie at 5–25 (VWLAYLLTAVVFSLAPGSGTV), 41–61 (GAIIGLQIGLACHIVLVGIGI), 68–88 (SALAFTLIKWIGAAYLVWLGI), 117–137 (LINLTNPKSIVFLVALFPQFI), and 147–167 (FLVLGITTVTIDAIVMFGYTA).

It belongs to the Rht family.

It is found in the cell inner membrane. Its function is as follows. Involved in positive regulation of motility and negative regulation of biofilm formation. This is an uncharacterized protein from Vibrio cholerae serotype O1 (strain ATCC 39315 / El Tor Inaba N16961).